We begin with the raw amino-acid sequence, 309 residues long: tRNA dimethylallyltransferase (309 aa).

9 to 16 (GPTAVGKT) contributes to the ATP binding site. Position 11–16 (11–16 (TAVGKT)) interacts with substrate. The interval 34–37 (DSMQ) is interaction with substrate tRNA.

The protein belongs to the IPP transferase family. Monomer. Requires Mg(2+) as cofactor.

The catalysed reaction is adenosine(37) in tRNA + dimethylallyl diphosphate = N(6)-dimethylallyladenosine(37) in tRNA + diphosphate. Functionally, catalyzes the transfer of a dimethylallyl group onto the adenine at position 37 in tRNAs that read codons beginning with uridine, leading to the formation of N6-(dimethylallyl)adenosine (i(6)A). The protein is tRNA dimethylallyltransferase of Enterococcus faecalis (strain ATCC 700802 / V583).